Consider the following 250-residue polypeptide: Hydroxyethylthiazole kinase (250 aa).

Met39 provides a ligand contact to substrate. 2 residues coordinate ATP: Arg114 and Thr159. Residue Gly186 coordinates substrate.

It belongs to the Thz kinase family. It depends on Mg(2+) as a cofactor.

It catalyses the reaction 5-(2-hydroxyethyl)-4-methylthiazole + ATP = 4-methyl-5-(2-phosphooxyethyl)-thiazole + ADP + H(+). Its pathway is cofactor biosynthesis; thiamine diphosphate biosynthesis; 4-methyl-5-(2-phosphoethyl)-thiazole from 5-(2-hydroxyethyl)-4-methylthiazole: step 1/1. In terms of biological role, catalyzes the phosphorylation of the hydroxyl group of 4-methyl-5-beta-hydroxyethylthiazole (THZ). This chain is Hydroxyethylthiazole kinase, found in Lactococcus lactis subsp. lactis (strain IL1403) (Streptococcus lactis).